The primary structure comprises 944 residues: Translation initiation factor IF-2 (944 aa).

Residues 61 to 281 (IQANQPAKNP…TAKNNKSHKI (221 aa)) form a disordered region. The segment covering 132–150 (TFENQTPPTENTPKVVSHS) has biased composition (polar residues). The span at 151–169 (QIEKAKQKLQEIQKSREAL) shows a compositional bias: basic and acidic residues. Residues 175–185 (SNANNASNTNN) are compositionally biased toward low complexity. The segment covering 186–203 (AKKEISEVKKQEQEIKRH) has biased composition (basic and acidic residues). Basic residues predominate over residues 204 to 215 (ENIKRRTGFRVI). The span at 244–259 (EDIKKEWQEKDKQEAK) shows a compositional bias: basic and acidic residues. One can recognise a tr-type G domain in the interval 443–612 (ERPPVVTIMG…LIQADIMELK (170 aa)). Residues 452 to 459 (GHVDHGKT) are G1. 452 to 459 (GHVDHGKT) contacts GTP. The G2 stretch occupies residues 477-481 (GITQH). The segment at 498-501 (DTPG) is G3. Residues 498-502 (DTPGH) and 552-555 (NKMD) contribute to the GTP site. The tract at residues 552–555 (NKMD) is G4. Residues 588 to 590 (SAK) are G5.

It belongs to the TRAFAC class translation factor GTPase superfamily. Classic translation factor GTPase family. IF-2 subfamily.

The protein resides in the cytoplasm. In terms of biological role, one of the essential components for the initiation of protein synthesis. Protects formylmethionyl-tRNA from spontaneous hydrolysis and promotes its binding to the 30S ribosomal subunits. Also involved in the hydrolysis of GTP during the formation of the 70S ribosomal complex. In Helicobacter pylori (strain HPAG1), this protein is Translation initiation factor IF-2.